The following is a 113-amino-acid chain: MSDVSVPLTFSDVAAAKVKTLIAEEENPNLKLRVYITGGGCSGFQYGFTFDEEVNEGDMTLVNDGVTLVVDPMSLQYLIGGIVDYTEGLEGSRFFINNPNATTTCGCGASFSV.

3 residues coordinate iron-sulfur cluster: Cys-41, Cys-105, and Cys-107.

Belongs to the HesB/IscA family. As to quaternary structure, homodimer. Iron-sulfur cluster serves as cofactor.

Its function is as follows. Required for insertion of 4Fe-4S clusters for at least IspG. This Aliivibrio salmonicida (strain LFI1238) (Vibrio salmonicida (strain LFI1238)) protein is Iron-sulfur cluster insertion protein ErpA.